A 137-amino-acid chain; its full sequence is Probable glycine cleavage system H protein 1 (137 aa).

Residues 31–113 form the Lipoyl-binding domain; sequence VAVIGITDYA…YGEGWIFKLK (83 aa). Lys-72 carries the post-translational modification N6-lipoyllysine.

This sequence belongs to the GcvH family. The glycine cleavage system is composed of four proteins: P, T, L and H. (R)-lipoate is required as a cofactor.

The glycine cleavage system catalyzes the degradation of glycine. The H protein shuttles the methylamine group of glycine from the P protein to the T protein. The protein is Probable glycine cleavage system H protein 1 of Saccharolobus solfataricus (strain ATCC 35092 / DSM 1617 / JCM 11322 / P2) (Sulfolobus solfataricus).